Here is a 225-residue protein sequence, read N- to C-terminus: Chromosome partition protein MukE (225 aa).

The interval 197–225 (RDGEAMPIENHLQLNDETEENQPDSGEEE) is disordered. The segment covering 212–225 (DETEENQPDSGEEE) has biased composition (acidic residues).

The protein belongs to the MukE family. Interacts, and probably forms a ternary complex, with MukF and MukB. The complex formation is stimulated by calcium or magnesium.

Its subcellular location is the cytoplasm. It localises to the nucleoid. Functionally, involved in chromosome condensation, segregation and cell cycle progression. May participate in facilitating chromosome segregation by condensation DNA from both sides of a centrally located replisome during cell division. Probably acts via its interaction with MukB and MukF. The sequence is that of Chromosome partition protein MukE from Escherichia coli O157:H7.